The primary structure comprises 132 residues: Small ribosomal subunit protein uS12 (132 aa).

D89 carries the 3-methylthioaspartic acid modification. The disordered stretch occupies residues 103 to 132 (DTSGVADRRQSRSKYGAKQPKEGGAAKGKK).

This sequence belongs to the universal ribosomal protein uS12 family. As to quaternary structure, part of the 30S ribosomal subunit. Contacts proteins S8 and S17. May interact with IF1 in the 30S initiation complex.

With S4 and S5 plays an important role in translational accuracy. Functionally, interacts with and stabilizes bases of the 16S rRNA that are involved in tRNA selection in the A site and with the mRNA backbone. Located at the interface of the 30S and 50S subunits, it traverses the body of the 30S subunit contacting proteins on the other side and probably holding the rRNA structure together. The combined cluster of proteins S8, S12 and S17 appears to hold together the shoulder and platform of the 30S subunit. The chain is Small ribosomal subunit protein uS12 from Chlorobium phaeovibrioides (strain DSM 265 / 1930) (Prosthecochloris vibrioformis (strain DSM 265)).